The primary structure comprises 183 residues: 2-epi-5-epi-valiolone epimerase (183 aa).

In terms of domain architecture, VOC spans 11 to 155 (AVHHVAYTVP…WGMQLELINL (145 aa)). Positions 14, 76, 99, and 151 each coordinate a divalent metal cation.

Homodimer. A divalent metal cation is required as a cofactor.

The enzyme catalyses 2-epi-5-epi-valiolone = 5-epi-valiolone. Its pathway is antibiotic biosynthesis. Its function is as follows. Catalyzes the epimerization of 2-epi-5-epi-valiolone to 5-epi-valiolone. Involved in cetoniacytone A biosynthesis. This Actinomyces sp protein is 2-epi-5-epi-valiolone epimerase.